The sequence spans 581 residues: Proline--tRNA ligase (581 aa).

Belongs to the class-II aminoacyl-tRNA synthetase family. ProS type 1 subfamily. As to quaternary structure, homodimer.

Its subcellular location is the cytoplasm. The enzyme catalyses tRNA(Pro) + L-proline + ATP = L-prolyl-tRNA(Pro) + AMP + diphosphate. Functionally, catalyzes the attachment of proline to tRNA(Pro) in a two-step reaction: proline is first activated by ATP to form Pro-AMP and then transferred to the acceptor end of tRNA(Pro). As ProRS can inadvertently accommodate and process non-cognate amino acids such as alanine and cysteine, to avoid such errors it has two additional distinct editing activities against alanine. One activity is designated as 'pretransfer' editing and involves the tRNA(Pro)-independent hydrolysis of activated Ala-AMP. The other activity is designated 'posttransfer' editing and involves deacylation of mischarged Ala-tRNA(Pro). The misacylated Cys-tRNA(Pro) is not edited by ProRS. The protein is Proline--tRNA ligase of Kosmotoga olearia (strain ATCC BAA-1733 / DSM 21960 / TBF 19.5.1).